The following is a 376-amino-acid chain: uncharacterized protein (376 aa).

A Phosphoserine modification is found at serine 59. One can recognise a Rho-GAP domain in the interval 139–367; sequence VAIEITVQRQ…CLIEHHNAIF (229 aa). The disordered stretch occupies residues 307–338; that stretch reads RPSRSPKKSNDFETATPWDLLSDEGEGPDASS.

This is an uncharacterized protein from Arabidopsis thaliana (Mouse-ear cress).